Reading from the N-terminus, the 357-residue chain is Peptide chain release factor 1 (357 aa).

At Q236 the chain carries N5-methylglutamine.

Belongs to the prokaryotic/mitochondrial release factor family. Post-translationally, methylated by PrmC. Methylation increases the termination efficiency of RF1.

The protein localises to the cytoplasm. Its function is as follows. Peptide chain release factor 1 directs the termination of translation in response to the peptide chain termination codons UAG and UAA. In Mycobacterium marinum (strain ATCC BAA-535 / M), this protein is Peptide chain release factor 1.